Reading from the N-terminus, the 244-residue chain is Pyridoxine 5'-phosphate synthase (244 aa).

Asn-12 provides a ligand contact to 3-amino-2-oxopropyl phosphate. 14-15 (DH) is a binding site for 1-deoxy-D-xylulose 5-phosphate. Arg-23 lines the 3-amino-2-oxopropyl phosphate pocket. The Proton acceptor role is filled by His-48. Arg-50 and His-55 together coordinate 1-deoxy-D-xylulose 5-phosphate. The active-site Proton acceptor is Glu-75. Thr-105 is a binding site for 1-deoxy-D-xylulose 5-phosphate. The Proton donor role is filled by His-196. Residues Gly-197 and 218 to 219 (GH) contribute to the 3-amino-2-oxopropyl phosphate site.

Belongs to the PNP synthase family. Homooctamer; tetramer of dimers.

It localises to the cytoplasm. The catalysed reaction is 3-amino-2-oxopropyl phosphate + 1-deoxy-D-xylulose 5-phosphate = pyridoxine 5'-phosphate + phosphate + 2 H2O + H(+). It participates in cofactor biosynthesis; pyridoxine 5'-phosphate biosynthesis; pyridoxine 5'-phosphate from D-erythrose 4-phosphate: step 5/5. Functionally, catalyzes the complicated ring closure reaction between the two acyclic compounds 1-deoxy-D-xylulose-5-phosphate (DXP) and 3-amino-2-oxopropyl phosphate (1-amino-acetone-3-phosphate or AAP) to form pyridoxine 5'-phosphate (PNP) and inorganic phosphate. The polypeptide is Pyridoxine 5'-phosphate synthase (Alcanivorax borkumensis (strain ATCC 700651 / DSM 11573 / NCIMB 13689 / SK2)).